We begin with the raw amino-acid sequence, 362 residues long: UDP-3-O-acylglucosamine N-acyltransferase (362 aa).

His-251 serves as the catalytic Proton acceptor.

The protein belongs to the transferase hexapeptide repeat family. LpxD subfamily. As to quaternary structure, homotrimer.

The catalysed reaction is a UDP-3-O-[(3R)-3-hydroxyacyl]-alpha-D-glucosamine + a (3R)-hydroxyacyl-[ACP] = a UDP-2-N,3-O-bis[(3R)-3-hydroxyacyl]-alpha-D-glucosamine + holo-[ACP] + H(+). Its pathway is bacterial outer membrane biogenesis; LPS lipid A biosynthesis. Its function is as follows. Catalyzes the N-acylation of UDP-3-O-acylglucosamine using 3-hydroxyacyl-ACP as the acyl donor. Is involved in the biosynthesis of lipid A, a phosphorylated glycolipid that anchors the lipopolysaccharide to the outer membrane of the cell. The chain is UDP-3-O-acylglucosamine N-acyltransferase from Cupriavidus pinatubonensis (strain JMP 134 / LMG 1197) (Cupriavidus necator (strain JMP 134)).